Reading from the N-terminus, the 476-residue chain is H2.0-like homeobox protein (476 aa).

Disordered stretches follow at residues 120–169 (QHLP…PSSK), 328–401 (WRHS…HQTT), and 413–476 (TASS…LAGL). Composition is skewed to low complexity over residues 123-134 (PQQSPTQQQQPQ) and 158-168 (HHSGSAPAPSS). A DNA-binding region (homeobox) is located at residues 273 to 332 (RSWSRAVFSNLQRKGLEKRFEIQKYVTKPDRKQLAAMLGLTDAQVKVWFQNRRMKWRHSK). Composition is skewed to basic and acidic residues over residues 331–346 (SKEA…EAGE) and 355–368 (EGER…RSEG). Over residues 369–379 (EAESESSDSES) the composition is skewed to acidic residues. The segment covering 386–397 (DTERTEGTERSL) has biased composition (basic and acidic residues). Over residues 413-434 (TASSSTSGSSFSFSSTSSLGSG) the composition is skewed to low complexity. Polar residues-rich tracts occupy residues 435-446 (NTHVGSASSLGG) and 455-467 (HQPS…QSPE).

It belongs to the H2.0 homeobox family. As to expression, expressed in Th1 cells, CD8-positive T-cells, B-cells and NK cells.

It is found in the nucleus. Functionally, transcription factor required for TBX21/T-bet-dependent maturation of Th1 cells as well as maintenance of Th1-specific gene expression. Involved in embryogenesis and hematopoiesis. The sequence is that of H2.0-like homeobox protein (Hlx) from Mus musculus (Mouse).